We begin with the raw amino-acid sequence, 76 residues long: Translational regulator CsrA (76 aa).

It belongs to the CsrA/RsmA family. Homodimer; the beta-strands of each monomer intercalate to form a hydrophobic core, while the alpha-helices form wings that extend away from the core.

The protein resides in the cytoplasm. Its function is as follows. A translational regulator that binds mRNA to regulate translation initiation and/or mRNA stability. Usually binds in the 5'-UTR at or near the Shine-Dalgarno sequence preventing ribosome-binding, thus repressing translation. Its main target seems to be the major flagellin gene, while its function is anatagonized by FliW. This is Translational regulator CsrA from Helicobacter pylori (strain P12).